Consider the following 353-residue polypeptide: Photosystem II protein D1 (353 aa).

T2 carries the post-translational modification N-acetylthreonine. T2 carries the post-translational modification Phosphothreonine. 3 consecutive transmembrane segments (helical) span residues 29-46 (YIGW…TATS), 118-133 (HFLL…EWEL), and 142-156 (WIAV…AATA). H118 contributes to the chlorophyll a binding site. Y126 provides a ligand contact to pheophytin a. [CaMn4O5] cluster is bound by residues D170 and E189. A helical transmembrane segment spans residues 197–218 (FHMLGVAGVFGGSLFSAMHGSL). H198 is a chlorophyll a binding site. A quinone contacts are provided by residues H215 and 264 to 265 (SF). Residue H215 participates in Fe cation binding. H272 provides a ligand contact to Fe cation. A helical transmembrane segment spans residues 274–288 (FLAAWPVVGIWFTAL). [CaMn4O5] cluster is bound by residues H332, E333, D342, and A344. Positions 345–353 (AIEAPATNG) are excised as a propeptide.

Belongs to the reaction center PufL/M/PsbA/D family. PSII is composed of 1 copy each of membrane proteins PsbA, PsbB, PsbC, PsbD, PsbE, PsbF, PsbH, PsbI, PsbJ, PsbK, PsbL, PsbM, PsbT, PsbX, PsbY, PsbZ, Psb30/Ycf12, at least 3 peripheral proteins of the oxygen-evolving complex and a large number of cofactors. It forms dimeric complexes. The D1/D2 heterodimer binds P680, chlorophylls that are the primary electron donor of PSII, and subsequent electron acceptors. It shares a non-heme iron and each subunit binds pheophytin, quinone, additional chlorophylls, carotenoids and lipids. D1 provides most of the ligands for the Mn4-Ca-O5 cluster of the oxygen-evolving complex (OEC). There is also a Cl(-1) ion associated with D1 and D2, which is required for oxygen evolution. The PSII complex binds additional chlorophylls, carotenoids and specific lipids. is required as a cofactor. In terms of processing, tyr-161 forms a radical intermediate that is referred to as redox-active TyrZ, YZ or Y-Z. C-terminally processed by CTPA; processing is essential to allow assembly of the oxygen-evolving complex and thus photosynthetic growth.

The protein localises to the plastid membrane. It carries out the reaction 2 a plastoquinone + 4 hnu + 2 H2O = 2 a plastoquinol + O2. Photosystem II (PSII) is a light-driven water:plastoquinone oxidoreductase that uses light energy to abstract electrons from H(2)O, generating O(2) and a proton gradient subsequently used for ATP formation. It consists of a core antenna complex that captures photons, and an electron transfer chain that converts photonic excitation into a charge separation. The D1/D2 (PsbA/PsbD) reaction center heterodimer binds P680, the primary electron donor of PSII as well as several subsequent electron acceptors. The protein is Photosystem II protein D1 of Cuscuta exaltata (Tall dodder).